Here is a 319-residue protein sequence, read N- to C-terminus: MAKEIVKELLPLIRVYKDGSVERLLSSENVAASPEDPQTGVSSKDIVIADNPYVSARIFLPKSHHTNNKLPIFLYFHGGAFCVESAFSFFVHRYLNILASEANIIAISVDFRLLPHHPIPAAYEDGWTTLKWIASHANNTNTTNPEPWLLNHADFTKVYVGGETSGANIAHNLLLRAGNESLPGDLKILGGLLCCPFFWGSKPIGSEAVEGHEQSLAMKVWNFACPDAPGGIDNPWINPCVPGAPSLATLACSKLLVTITGKDEFRDRDILYHHTVEQSGWQGELQLFDAGDEEHAFQLFKPETHLAKAMIKRLASFLV.

Positions 77–79 match the Involved in the stabilization of the negatively charged intermediate by the formation of the oxyanion hole motif; it reads HGG. The Proton acceptor role is filled by T164. The active site involves D263. Catalysis depends on H295, which acts as the Proton donor/acceptor.

The protein belongs to the 'GDXG' lipolytic enzyme family.

The catalysed reaction is (2R,3S)-2,4',7-trihydroxyisoflavanone = daidzein + H2O + H(+). It catalyses the reaction 2-hydroxy-2,3-dihydrogenistein = genistein + H2O + H(+). The enzyme catalyses a carboxylic ester + H2O = an alcohol + a carboxylate + H(+). It participates in secondary metabolite biosynthesis; flavonoid biosynthesis. Functionally, dehydratase that mediates the biosynthesis of isoflavonoids. Can use both 4'-hydroxylated and 4'-methoxylated 2-hydroxyisoflavanones as substrates. Also has a slight carboxylesterase activity toward p-nitrophenyl butyrate. The chain is 2-hydroxyisoflavanone dehydratase (HIDH) from Glycine max (Soybean).